The sequence spans 1052 residues: uncharacterized protein (1052 aa).

The region spanning 389–561 (WINKGKTFAI…NKGGNYIMIN (173 aa)) is the Helicase ATP-binding domain. 400–407 (SAMGTGKT) contributes to the ATP binding site.

Belongs to the mimivirus R1 family.

This is an uncharacterized protein from Acanthamoeba polyphaga mimivirus (APMV).